The primary structure comprises 325 residues: Pyruvate dehydrogenase E1 component subunit beta (325 aa).

Glu-60 is a binding site for thiamine diphosphate.

In terms of assembly, heterodimer of an alpha and a beta chain. Requires thiamine diphosphate as cofactor.

It catalyses the reaction N(6)-[(R)-lipoyl]-L-lysyl-[protein] + pyruvate + H(+) = N(6)-[(R)-S(8)-acetyldihydrolipoyl]-L-lysyl-[protein] + CO2. Functionally, the pyruvate dehydrogenase complex catalyzes the overall conversion of pyruvate to acetyl-CoA and CO(2). It contains multiple copies of three enzymatic components: pyruvate dehydrogenase (E1), dihydrolipoamide acetyltransferase (E2) and lipoamide dehydrogenase (E3). The polypeptide is Pyruvate dehydrogenase E1 component subunit beta (pdhB) (Geobacillus stearothermophilus (Bacillus stearothermophilus)).